Reading from the N-terminus, the 137-residue chain is Flavodoxin (137 aa).

The 136-residue stretch at Val2–Ala137 folds into the Flavodoxin-like domain.

This sequence belongs to the flavodoxin family. Requires FMN as cofactor.

In terms of biological role, low-potential electron donor to a number of redox enzymes. The chain is Flavodoxin from Megasphaera elsdenii.